A 245-amino-acid chain; its full sequence is Probable transcriptional regulatory protein NSE_0641 (245 aa).

The tract at residues 1 to 22 (MAGHSQYANIKHRKNAQDAKRA) is disordered.

Belongs to the TACO1 family.

It localises to the cytoplasm. In Neorickettsia sennetsu (strain ATCC VR-367 / Miyayama) (Ehrlichia sennetsu), this protein is Probable transcriptional regulatory protein NSE_0641.